The chain runs to 681 residues: T-box-containing protein 2 (681 aa).

Positions 149 to 323 form a DNA-binding region, T-box; the sequence is LWDQFSRAGT…NNPFAKGFRE (175 aa). Disordered stretches follow at residues 316 to 351, 456 to 489, 521 to 558, and 589 to 611; these read PFAK…EQRR, GITS…NQSN, PNIN…LIPG, and ESGE…CQSG. Over residues 470-489 the composition is skewed to low complexity; it reads NSFTYYNSSSPSSSDSNQSN. Residues 521–534 are compositionally biased toward polar residues; it reads PNINIPNTVETNVH.

As to quaternary structure, monomer. In terms of tissue distribution, differentiating muscle and tailbud tip.

The protein resides in the nucleus. Involved in the transcriptional regulation of genes required for muscle differentiation. Binds to a palindromic site (called T site) and activates gene transcription when bound to such a site. The sequence is that of T-box-containing protein 2 (T2) from Halocynthia roretzi (Sea squirt).